Reading from the N-terminus, the 345-residue chain is uncharacterized protein (345 aa).

A run of 8 helical transmembrane segments spans residues 9–31 (VVAF…AAFV), 84–103 (TLVA…TYLL), 116–138 (YFSL…ILYT), 148–170 (VPMQ…SGIF), 182–204 (VVFV…TIHA), 269–286 (WFFW…GVLG), 291–308 (ISHY…IAGY), and 313–335 (HGLT…VFFI).

The protein localises to the cell membrane. This is an uncharacterized protein from Treponema pallidum (strain Nichols).